A 624-amino-acid chain; its full sequence is Actin-related protein 8 (624 aa).

N-acetylmethionine is present on M1. Residues 1 to 25 show a composition bias toward basic and acidic residues; sequence MTQAEKGDTENGKEKGGEKEKEQRG. Residues 1 to 29 form a disordered region; the sequence is MTQAEKGDTENGKEKGGEKEKEQRGVKRP. The ATP site is built by S55 and T56. S132 is subject to Phosphoserine. 283–286 is a binding site for ATP; it reads DVGD. S412 is subject to Phosphoserine. The segment at 430 to 462 is disordered; it reads SKQEQSAKATADRKSASKPIGFEGDLRGQSSDL.

This sequence belongs to the actin family. ARP8 subfamily. As to quaternary structure, component of the chromatin remodeling INO80 complex; specifically part of a complex module associated with the DBINO domain of INO80. Exists as monomers and dimers, but the dimer is most probably the biologically relevant form required for stable interactions with histones that exploits the twofold symmetry of the nucleosome core.

The protein localises to the nucleus. It localises to the chromosome. In terms of biological role, plays an important role in the functional organization of mitotic chromosomes. Exhibits low basal ATPase activity, and unable to polymerize. Proposed core component of the chromatin remodeling INO80 complex which is involved in transcriptional regulation, DNA replication and probably DNA repair. Required for the recruitment of INO80 (and probably the INO80 complex) to sites of DNA damage Strongly prefer nucleosomes and H3-H4 tetramers over H2A-H2B dimers, suggesting it may act as a nucleosome recognition module within the complex. This chain is Actin-related protein 8 (ACTR8), found in Pongo abelii (Sumatran orangutan).